Consider the following 380-residue polypeptide: Cytochrome b (380 aa).

4 consecutive transmembrane segments (helical) span residues 34 to 54, 78 to 99, 114 to 134, and 179 to 199; these read FGSLLGICLTTQILTGLLLAM, WLIRNIHANGASFFFICIYLHI, WNTGILLLLTLMATAFVGYVL, and FFALHFLLPFMIAGLTLIHLT. Heme b is bound by residues H84 and H98. Heme b is bound by residues H183 and H197. H202 contacts a ubiquinone. 4 helical membrane-spanning segments follow: residues 227–247, 289–309, 321–341, and 348–368; these read LKDTLGFMLMLLPLTTLALFS, LGGVLALAASVLILFLSPLLH, LSQLLFWILIANLFILTWVGS, and FIIIGQLASLTYFTILLILLP.

The protein belongs to the cytochrome b family. The cytochrome bc1 complex contains 11 subunits: 3 respiratory subunits (MT-CYB, CYC1 and UQCRFS1), 2 core proteins (UQCRC1 and UQCRC2) and 6 low-molecular weight proteins (UQCRH/QCR6, UQCRB/QCR7, UQCRQ/QCR8, UQCR10/QCR9, UQCR11/QCR10 and a cleavage product of UQCRFS1). This cytochrome bc1 complex then forms a dimer. Requires heme b as cofactor.

It is found in the mitochondrion inner membrane. In terms of biological role, component of the ubiquinol-cytochrome c reductase complex (complex III or cytochrome b-c1 complex) that is part of the mitochondrial respiratory chain. The b-c1 complex mediates electron transfer from ubiquinol to cytochrome c. Contributes to the generation of a proton gradient across the mitochondrial membrane that is then used for ATP synthesis. In Fregetta tropica (Black-bellied storm-petrel), this protein is Cytochrome b (MT-CYB).